We begin with the raw amino-acid sequence, 115 residues long: U3-lycotoxin-Ls1a (115 aa).

The N-terminal stretch at 1 to 20 (MKFVLLFGVLLVTLFSYSSA) is a signal peptide. The propeptide occupies 21–44 (EMLDDFDQADEEELLSLIEKEEAR). Cystine bridges form between Cys48–Cys63, Cys55–Cys72, Cys62–Cys87, and Cys74–Cys85.

It belongs to the neurotoxin 19 (CSTX) family. 01 subfamily. As to expression, expressed by the venom gland.

The protein resides in the secreted. This is U3-lycotoxin-Ls1a from Lycosa singoriensis (Wolf spider).